Consider the following 433-residue polypeptide: Ribosome biogenesis protein WDR12 homolog (433 aa).

The segment at 21 to 102 (VEVFVVSYRH…ESVISIECIV (82 aa)) is ubiquitin-like (UBL) domain. WD repeat units follow at residues 114–151 (ALLD…LTSS), 153–194 (LHEE…SSTF), 203–242 (GHER…TSTV), 270–310 (GHKD…QINT), 312–351 (AAKK…GTLV), 357–397 (GHCG…TPLY), and 401–433 (GHSD…RRKM).

The protein belongs to the WD repeat WDR12/YTM1 family.

It localises to the nucleus. Its subcellular location is the nucleolus. It is found in the nucleoplasm. Required for maturation of ribosomal RNAs and formation of the large ribosomal subunit. The polypeptide is Ribosome biogenesis protein WDR12 homolog (Brugia malayi (Filarial nematode worm)).